A 105-amino-acid chain; its full sequence is Iron-sulfur cluster assembly protein CyaY (105 aa).

The protein belongs to the frataxin family.

In terms of biological role, involved in iron-sulfur (Fe-S) cluster assembly. May act as a regulator of Fe-S biogenesis. This Psychromonas ingrahamii (strain DSM 17664 / CCUG 51855 / 37) protein is Iron-sulfur cluster assembly protein CyaY.